A 518-amino-acid polypeptide reads, in one-letter code: GMP synthase [glutamine-hydrolyzing] (518 aa).

A Glutamine amidotransferase type-1 domain is found at 6–200; the sequence is RLLIIDFGSQ…FVRLAGFKGD (195 aa). The active-site Nucleophile is the Cys84. Catalysis depends on residues His175 and Glu177. Positions 201–393 constitute a GMPS ATP-PPase domain; it reads WTMGAYREEA…LGLPESFIGR (193 aa). An ATP-binding site is contributed by 228-234; sequence SGGVDSS.

In terms of assembly, homodimer.

It catalyses the reaction XMP + L-glutamine + ATP + H2O = GMP + L-glutamate + AMP + diphosphate + 2 H(+). It functions in the pathway purine metabolism; GMP biosynthesis; GMP from XMP (L-Gln route): step 1/1. In terms of biological role, catalyzes the synthesis of GMP from XMP. The protein is GMP synthase [glutamine-hydrolyzing] of Cereibacter sphaeroides (strain ATCC 17023 / DSM 158 / JCM 6121 / CCUG 31486 / LMG 2827 / NBRC 12203 / NCIMB 8253 / ATH 2.4.1.) (Rhodobacter sphaeroides).